Consider the following 298-residue polypeptide: Bifunctional protein FolD (298 aa).

NADP(+)-binding positions include 165–167, S190, and I231; that span reads GRS.

Belongs to the tetrahydrofolate dehydrogenase/cyclohydrolase family. As to quaternary structure, homodimer.

The catalysed reaction is (6R)-5,10-methylene-5,6,7,8-tetrahydrofolate + NADP(+) = (6R)-5,10-methenyltetrahydrofolate + NADPH. The enzyme catalyses (6R)-5,10-methenyltetrahydrofolate + H2O = (6R)-10-formyltetrahydrofolate + H(+). Its pathway is one-carbon metabolism; tetrahydrofolate interconversion. Catalyzes the oxidation of 5,10-methylenetetrahydrofolate to 5,10-methenyltetrahydrofolate and then the hydrolysis of 5,10-methenyltetrahydrofolate to 10-formyltetrahydrofolate. This Prochlorococcus marinus (strain MIT 9312) protein is Bifunctional protein FolD.